The following is a 655-amino-acid chain: Chaperone protein dnaK1 (655 aa).

T197 is subject to Phosphothreonine; by autocatalysis.

It belongs to the heat shock protein 70 family.

Functionally, acts as a chaperone. In Synechococcus elongatus (strain ATCC 33912 / PCC 7942 / FACHB-805) (Anacystis nidulans R2), this protein is Chaperone protein dnaK1 (dnaK1).